The chain runs to 443 residues: MGQGPSGGLNRQGDRKPDGGEKKEKKFEPAAPPARVGRKQRKQKGPEAAARLPTVTPSTKCKLRLLKLERIKDYLLMEEEFVANQERLKPQEEKAEEDRSKVDDLRGTPMSVGNLEELIDENHAIVSSSVGPEYYVGILSFVDKDQLEPGCSILMHNKVLSVVGILQDEVDPMVSVMKVEKAPLESYADIGGLEAQIQEIKEAVELPLTHPELYEDIGIKPPKGVILYGEPGTGKTLLAKAVANSTSATFLRVVGSELIQKYLGDGPKLVRELFRVADDLSPSIVFIDEIDAVGTKRYDANSGGEREIQRTMLELLNQLDGFDSRGDVKVILATNRIESLDPALLRPGRIDRKIEFPLPDIKTRRRIFQIHTSKMTLAEDVNLEEFVMTKDEFSGADIKAICTEAGLLALRERRMKVTHVDFKKAKEKVMFKKKEGVPEGLYM.

Disordered stretches follow at residues 1 to 55 and 87 to 108; these read MGQG…LPTV and RLKP…LRGT. Composition is skewed to basic and acidic residues over residues 12-28 and 87-106; these read QGDR…KKFE and RLKP…DDLR. 229–236 lines the ATP pocket; the sequence is GEPGTGKT. Residues Lys-296 and Lys-433 each participate in a glycyl lysine isopeptide (Lys-Gly) (interchain with G-Cter in ubiquitin) cross-link.

The protein belongs to the AAA ATPase family. Component of the 19S regulatory particle (RP/PA700) base subcomplex of the 26S proteasome. The 26S proteasome is composed of a core protease (CP), known as the 20S proteasome, capped at one or both ends by the 19S regulatory particle (RP/PA700). The RP/PA700 complex is composed of at least 17 different subunits in two subcomplexes, the base and the lid, which form the portions proximal and distal to the 20S proteolytic core, respectively. Preferentially expressed in the root and shoot apical meristem.

It localises to the cytoplasm. The protein localises to the nucleus. Its function is as follows. The 26S protease is involved in the ATP-dependent degradation of ubiquitinated proteins. The regulatory (or ATPase) complex confers ATP dependency and substrate specificity to the 26S complex. Acts redundantly with RPT2A in the regulation of gametogenesis. With RPT2A plays a critical role in 26S proteasome assembly. In Arabidopsis thaliana (Mouse-ear cress), this protein is 26S proteasome regulatory subunit 4 homolog B.